Consider the following 349-residue polypeptide: tRNA N6-adenosine threonylcarbamoyltransferase (349 aa).

Histidine 115 and histidine 119 together coordinate Fe cation. Substrate-binding positions include leucine 137–glycine 141, aspartate 170, glycine 183, and asparagine 281. Aspartate 309 is a Fe cation binding site.

Belongs to the KAE1 / TsaD family. Fe(2+) is required as a cofactor.

Its subcellular location is the cytoplasm. It carries out the reaction L-threonylcarbamoyladenylate + adenosine(37) in tRNA = N(6)-L-threonylcarbamoyladenosine(37) in tRNA + AMP + H(+). Its function is as follows. Required for the formation of a threonylcarbamoyl group on adenosine at position 37 (t(6)A37) in tRNAs that read codons beginning with adenine. Is involved in the transfer of the threonylcarbamoyl moiety of threonylcarbamoyl-AMP (TC-AMP) to the N6 group of A37, together with TsaE and TsaB. TsaD likely plays a direct catalytic role in this reaction. The protein is tRNA N6-adenosine threonylcarbamoyltransferase of Methylobacterium nodulans (strain LMG 21967 / CNCM I-2342 / ORS 2060).